A 426-amino-acid chain; its full sequence is Colanic acid biosynthesis protein WcaK (426 aa).

It belongs to the polysaccharide pyruvyl transferase family.

It functions in the pathway slime biogenesis; slime polysaccharide biosynthesis. The chain is Colanic acid biosynthesis protein WcaK (wcaK) from Escherichia coli (strain K12).